Here is a 1538-residue protein sequence, read N- to C-terminus: Phenolphthiocerol/phthiocerol polyketide synthase subunit B (1538 aa).

A Ketosynthase family 3 (KS3) domain is found at 33-455 (AEPVAVVGIG…GTNAHVIIEQ (423 aa)). Catalysis depends on for beta-ketoacyl synthase activity residues Cys205, His340, and His377. The segment at 553 to 882 (DGSPGPGTVF…TNLYTADIAH (330 aa)) is acyltransferase. Catalysis depends on Ser649, which acts as the For malonyltransferase activity. 1153 to 1196 (SQLVIGATGNIGPHLIRQLARMGAKTIVAMARKPGALDELTQCL) lines the NADP(+) pocket. The segment at 1153–1328 (SQLVIGATGN…TVVDWGLWKS (176 aa)) is beta-ketoacyl reductase. Residues 1423 to 1498 (DMLFDHVGAL…SLTDYLATVL (76 aa)) enclose the Carrier domain. Residue Ser1458 is modified to O-(pantetheine 4'-phosphoryl)serine.

NADP(+) is required as a cofactor. It depends on pantetheine 4'-phosphate as a cofactor.

The enzyme catalyses icosanoyl-[(phenol)carboxyphthiodiolenone synthase] + 2 (S)-methylmalonyl-CoA + 3 malonyl-CoA + 5 NADPH + 10 H(+) = C32-carboxyphthiodiolenone-[(phenol)carboxyphthiodiolenone synthase] + 5 CO2 + 5 NADP(+) + 5 CoA + 2 H2O. The catalysed reaction is docosanoyl-[(phenol)carboxyphthiodiolenone synthase] + 2 (S)-methylmalonyl-CoA + 3 malonyl-CoA + 5 NADPH + 10 H(+) = C34-carboxyphthiodiolenone-[(phenol)carboxyphthiodiolenone synthase] + 5 CO2 + 5 NADP(+) + 5 CoA + 2 H2O. It carries out the reaction 17-(4-hydroxyphenyl)heptadecanoyl-[(phenol)carboxyphthiodiolenone synthase] + 2 (S)-methylmalonyl-CoA + 3 malonyl-CoA + 5 NADPH + 10 H(+) = C35-(phenol)carboxyphthiodiolenone-[(phenol)carboxyphthiodiolenone synthase] + 5 CO2 + 5 NADP(+) + 5 CoA + 2 H2O. It catalyses the reaction 19-(4-hydroxyphenyl)nonadecanoyl-[(phenol)carboxyphthiodiolenone synthase] + 2 (S)-methylmalonyl-CoA + 3 malonyl-CoA + 5 NADPH + 10 H(+) = C37-(phenol)carboxyphthiodiolenone-[(phenol)carboxyphthiodiolenone synthase] + 5 CO2 + 5 NADP(+) + 5 CoA + 2 H2O. The protein operates within lipid metabolism; fatty acid biosynthesis. In terms of biological role, part of the PpsABCDE complex involved in the biosynthesis of the lipid core common to phthiocerols and phenolphthiocerols by successive additions of malonyl-CoA or methylmalonyl-CoA extender units. PpsA can accept as substrate the activated forms of either icosanoyl (C20), docosanoyl (C22) or lignoceroyl (C24) groups from FadD26, or a (4-hydroxyphenyl)-C17 or (4-hydroxyphenyl)-C19 fatty acyl from FadD29. PpsA initiates the biosynthesis and extends its substrate using a malonyl-CoA extender unit. The PpsB and PpsC proteins add the second and third malonyl-CoA extender units. PpsD adds an (R)-methylmalonyl unit and PpsE adds a second (R)-methylmalonyl unit. The incorporation of the methylmalonyl units results in formation of two branched methyl groups in the elongated product. This chain is Phenolphthiocerol/phthiocerol polyketide synthase subunit B (ppsB), found in Mycobacterium bovis (strain ATCC BAA-935 / AF2122/97).